We begin with the raw amino-acid sequence, 278 residues long: Sulfur carrier protein FdhD (278 aa).

Cys-124 (cysteine persulfide intermediate) is an active-site residue.

The protein belongs to the FdhD family.

Its subcellular location is the cytoplasm. Required for formate dehydrogenase (FDH) activity. Acts as a sulfur carrier protein that transfers sulfur from IscS to the molybdenum cofactor prior to its insertion into FDH. This chain is Sulfur carrier protein FdhD, found in Burkholderia cenocepacia (strain ATCC BAA-245 / DSM 16553 / LMG 16656 / NCTC 13227 / J2315 / CF5610) (Burkholderia cepacia (strain J2315)).